The primary structure comprises 396 residues: Elongation factor Tu 2 (396 aa).

The tr-type G domain occupies 10–206 (KPHINVGTIG…VLDSYIPEPQ (197 aa)). The G1 stretch occupies residues 19–26 (GHVDHGKT). 19–26 (GHVDHGKT) is a GTP binding site. Thr-26 provides a ligand contact to Mg(2+). The interval 60–64 (GITIN) is G2. The interval 81-84 (DCPG) is G3. GTP is bound by residues 81–85 (DCPGH) and 136–139 (NKAD). The G4 stretch occupies residues 136-139 (NKAD). The interval 174–176 (SAL) is G5.

It belongs to the TRAFAC class translation factor GTPase superfamily. Classic translation factor GTPase family. EF-Tu/EF-1A subfamily. Monomer.

It is found in the cytoplasm. It catalyses the reaction GTP + H2O = GDP + phosphate + H(+). Its function is as follows. GTP hydrolase that promotes the GTP-dependent binding of aminoacyl-tRNA to the A-site of ribosomes during protein biosynthesis. In Nitrosomonas eutropha (strain DSM 101675 / C91 / Nm57), this protein is Elongation factor Tu 2.